The primary structure comprises 268 residues: Tryptophan synthase alpha chain (268 aa).

Active-site proton acceptor residues include E49 and D60.

The protein belongs to the TrpA family. In terms of assembly, tetramer of two alpha and two beta chains.

The catalysed reaction is (1S,2R)-1-C-(indol-3-yl)glycerol 3-phosphate + L-serine = D-glyceraldehyde 3-phosphate + L-tryptophan + H2O. The protein operates within amino-acid biosynthesis; L-tryptophan biosynthesis; L-tryptophan from chorismate: step 5/5. The alpha subunit is responsible for the aldol cleavage of indoleglycerol phosphate to indole and glyceraldehyde 3-phosphate. This is Tryptophan synthase alpha chain from Escherichia coli O139:H28 (strain E24377A / ETEC).